Reading from the N-terminus, the 274-residue chain is Leucyl/phenylalanyl-tRNA--protein transferase (274 aa).

It belongs to the L/F-transferase family.

Its subcellular location is the cytoplasm. The catalysed reaction is N-terminal L-lysyl-[protein] + L-leucyl-tRNA(Leu) = N-terminal L-leucyl-L-lysyl-[protein] + tRNA(Leu) + H(+). It carries out the reaction N-terminal L-arginyl-[protein] + L-leucyl-tRNA(Leu) = N-terminal L-leucyl-L-arginyl-[protein] + tRNA(Leu) + H(+). The enzyme catalyses L-phenylalanyl-tRNA(Phe) + an N-terminal L-alpha-aminoacyl-[protein] = an N-terminal L-phenylalanyl-L-alpha-aminoacyl-[protein] + tRNA(Phe). Functionally, functions in the N-end rule pathway of protein degradation where it conjugates Leu, Phe and, less efficiently, Met from aminoacyl-tRNAs to the N-termini of proteins containing an N-terminal arginine or lysine. The polypeptide is Leucyl/phenylalanyl-tRNA--protein transferase (Psychrobacter cryohalolentis (strain ATCC BAA-1226 / DSM 17306 / VKM B-2378 / K5)).